A 142-amino-acid chain; its full sequence is Ribosome-binding factor A (142 aa).

This sequence belongs to the RbfA family. As to quaternary structure, monomer. Binds 30S ribosomal subunits, but not 50S ribosomal subunits or 70S ribosomes.

Its subcellular location is the cytoplasm. Its function is as follows. One of several proteins that assist in the late maturation steps of the functional core of the 30S ribosomal subunit. Associates with free 30S ribosomal subunits (but not with 30S subunits that are part of 70S ribosomes or polysomes). Required for efficient processing of 16S rRNA. May interact with the 5'-terminal helix region of 16S rRNA. The polypeptide is Ribosome-binding factor A (Leifsonia xyli subsp. xyli (strain CTCB07)).